The following is a 90-amino-acid chain: DNA-binding protein HU-beta (90 aa).

This sequence belongs to the bacterial histone-like protein family. Heterodimer of an alpha and a beta chain.

Functionally, histone-like DNA-binding protein which is capable of wrapping DNA to stabilize it, and thus to prevent its denaturation under extreme environmental conditions. This Escherichia coli O6:H1 (strain CFT073 / ATCC 700928 / UPEC) protein is DNA-binding protein HU-beta (hupB).